Here is a 452-residue protein sequence, read N- to C-terminus: Scaffold protein ILK (452 aa).

ANK repeat units lie at residues 2-30 (DDIF…LNQG), 31-63 (DDHG…INVM), 64-96 (NRGD…INAV), 97-129 (NEHG…VSIA), and 130-174 (NKYS…GTTR). Residues 193–446 (LSLSQKLNEN…PKFDMIVPIL (254 aa)) enclose the Protein kinase domain. ATP contacts are provided by Asn200, Asn202, Ser204, His270, Met272, and Asn279. Asp339 lines the Mg(2+) pocket. An ATP-binding site is contributed by Lys341. A Nuclear localization signal motif is present at residues 363 to 371 (KKPEEINRR).

The protein belongs to the protein kinase superfamily. TKL Ser/Thr protein kinase family. In terms of assembly, interacts with PXN/PAXILLIN (via LD motif 4).

It is found in the cell junction. Its subcellular location is the focal adhesion. It localises to the cell membrane. The protein resides in the cell projection. The protein localises to the lamellipodium. It is found in the cytoplasm. Its subcellular location is the myofibril. It localises to the sarcomere. The protein resides in the nucleus. The protein localises to the cytoskeleton. It is found in the microtubule organizing center. Its subcellular location is the centrosome. It localises to the cell cortex. In terms of biological role, scaffold protein which mediates protein-protein interactions during a range of cellular events including focal adhesion assembly, cell adhesion and cell migration. The protein is Scaffold protein ILK of Gallus gallus (Chicken).